Here is a 256-residue protein sequence, read N- to C-terminus: Phosphatidylglycerol--prolipoprotein diacylglyceryl transferase (256 aa).

3 helical membrane passes run 19-39, 56-76, and 91-111; these read VHWY…LGYW, LIFY…MLFY, and IWEG…AAWL. Position 139 (R139) interacts with a 1,2-diacyl-sn-glycero-3-phospho-(1'-sn-glycerol). A helical membrane pass occupies residues 231–251; it reads FGWLTMGQVLSIPMLLIGIWL.

Belongs to the Lgt family.

Its subcellular location is the cell inner membrane. It catalyses the reaction L-cysteinyl-[prolipoprotein] + a 1,2-diacyl-sn-glycero-3-phospho-(1'-sn-glycerol) = an S-1,2-diacyl-sn-glyceryl-L-cysteinyl-[prolipoprotein] + sn-glycerol 1-phosphate + H(+). Its pathway is protein modification; lipoprotein biosynthesis (diacylglyceryl transfer). In terms of biological role, catalyzes the transfer of the diacylglyceryl group from phosphatidylglycerol to the sulfhydryl group of the N-terminal cysteine of a prolipoprotein, the first step in the formation of mature lipoproteins. This chain is Phosphatidylglycerol--prolipoprotein diacylglyceryl transferase, found in Legionella pneumophila (strain Corby).